The chain runs to 265 residues: Tryptophan synthase alpha chain (265 aa).

Catalysis depends on proton acceptor residues Glu49 and Asp60.

This sequence belongs to the TrpA family. Tetramer of two alpha and two beta chains.

The enzyme catalyses (1S,2R)-1-C-(indol-3-yl)glycerol 3-phosphate + L-serine = D-glyceraldehyde 3-phosphate + L-tryptophan + H2O. Its pathway is amino-acid biosynthesis; L-tryptophan biosynthesis; L-tryptophan from chorismate: step 5/5. Functionally, the alpha subunit is responsible for the aldol cleavage of indoleglycerol phosphate to indole and glyceraldehyde 3-phosphate. This Polynucleobacter necessarius subsp. necessarius (strain STIR1) protein is Tryptophan synthase alpha chain.